A 467-amino-acid chain; its full sequence is Fumarate hydratase class II (467 aa).

Substrate contacts are provided by residues 98–100 (SGT), R126, 129–132 (HPND), 139–141 (SSN), and T187. H188 functions as the Proton donor/acceptor in the catalytic mechanism. Residue S318 is part of the active site. Residues S319 and 324–326 (KVN) each bind substrate.

Belongs to the class-II fumarase/aspartase family. Fumarase subfamily. As to quaternary structure, homotetramer.

It is found in the cytoplasm. It catalyses the reaction (S)-malate = fumarate + H2O. It participates in carbohydrate metabolism; tricarboxylic acid cycle; (S)-malate from fumarate: step 1/1. In terms of biological role, involved in the TCA cycle. Catalyzes the stereospecific interconversion of fumarate to L-malate. The chain is Fumarate hydratase class II from Shigella flexneri.